A 206-amino-acid chain; its full sequence is Cytochrome c oxidase assembly protein CtaG (206 aa).

Topologically, residues 1–22 (MTEQPTNRNDVPRRGLGRDATV) are cytoplasmic. A helical; Signal-anchor for type II membrane protein transmembrane segment spans residues 23–43 (ASICGLVVALMVGASYAAVPF). At 44–206 (YNWFCRATGF…GEPDSRKGAL (163 aa)) the chain is on the periplasmic side.

Belongs to the COX11/CtaG family.

The protein resides in the cell inner membrane. Functionally, exerts its effect at some terminal stage of cytochrome c oxidase synthesis, probably by being involved in the insertion of the copper B into subunit I. In Rhodopseudomonas palustris (strain BisB18), this protein is Cytochrome c oxidase assembly protein CtaG.